The primary structure comprises 298 residues: Bifunctional protein FolD (298 aa).

Residues 165-167, Ser190, and Ile231 contribute to the NADP(+) site; that span reads GRS.

It belongs to the tetrahydrofolate dehydrogenase/cyclohydrolase family. Homodimer.

The catalysed reaction is (6R)-5,10-methylene-5,6,7,8-tetrahydrofolate + NADP(+) = (6R)-5,10-methenyltetrahydrofolate + NADPH. It carries out the reaction (6R)-5,10-methenyltetrahydrofolate + H2O = (6R)-10-formyltetrahydrofolate + H(+). It functions in the pathway one-carbon metabolism; tetrahydrofolate interconversion. In terms of biological role, catalyzes the oxidation of 5,10-methylenetetrahydrofolate to 5,10-methenyltetrahydrofolate and then the hydrolysis of 5,10-methenyltetrahydrofolate to 10-formyltetrahydrofolate. The protein is Bifunctional protein FolD of Prochlorococcus marinus (strain AS9601).